A 500-amino-acid polypeptide reads, in one-letter code: Lysine--tRNA ligase (500 aa).

Glu410 and Glu417 together coordinate Mg(2+).

The protein belongs to the class-II aminoacyl-tRNA synthetase family. Homodimer. Requires Mg(2+) as cofactor.

The protein localises to the cytoplasm. It carries out the reaction tRNA(Lys) + L-lysine + ATP = L-lysyl-tRNA(Lys) + AMP + diphosphate. This chain is Lysine--tRNA ligase, found in Shewanella sediminis (strain HAW-EB3).